Consider the following 377-residue polypeptide: Nitric oxide reductase FlRd-NAD(+) reductase (377 aa).

The protein belongs to the FAD-dependent oxidoreductase family. FAD serves as cofactor.

Its subcellular location is the cytoplasm. The catalysed reaction is 2 reduced [nitric oxide reductase rubredoxin domain] + NAD(+) + H(+) = 2 oxidized [nitric oxide reductase rubredoxin domain] + NADH. It participates in nitrogen metabolism; nitric oxide reduction. Functionally, one of at least two accessory proteins for anaerobic nitric oxide (NO) reductase. Reduces the rubredoxin moiety of NO reductase. The sequence is that of Nitric oxide reductase FlRd-NAD(+) reductase from Escherichia coli O9:H4 (strain HS).